Reading from the N-terminus, the 185-residue chain is Small ribosomal subunit protein uS4c (185 aa).

Residues 72 to 134 (MRLDNVIFRL…PTSCNALKGE (63 aa)) form the S4 RNA-binding domain. Positions 132-154 (KGESPGGGETPDHLTASLSEGSR) are disordered.

This sequence belongs to the universal ribosomal protein uS4 family. As to quaternary structure, part of the 30S ribosomal subunit. Contacts protein S5. The interaction surface between S4 and S5 is involved in control of translational fidelity.

Its subcellular location is the plastid. The protein localises to the chloroplast. Its function is as follows. One of the primary rRNA binding proteins, it binds directly to 16S rRNA where it nucleates assembly of the body of the 30S subunit. In terms of biological role, with S5 and S12 plays an important role in translational accuracy. This is Small ribosomal subunit protein uS4c (rps4) from Woodwardia unigemmata (Chainfern).